A 233-amino-acid chain; its full sequence is Large ribosomal subunit protein uL1 (233 aa).

The protein belongs to the universal ribosomal protein uL1 family. In terms of assembly, part of the 50S ribosomal subunit.

In terms of biological role, binds directly to 23S rRNA. The L1 stalk is quite mobile in the ribosome, and is involved in E site tRNA release. Functionally, protein L1 is also a translational repressor protein, it controls the translation of the L11 operon by binding to its mRNA. This is Large ribosomal subunit protein uL1 from Novosphingobium aromaticivorans (strain ATCC 700278 / DSM 12444 / CCUG 56034 / CIP 105152 / NBRC 16084 / F199).